A 417-amino-acid polypeptide reads, in one-letter code: Zinc finger protein CONSTANS-LIKE 16 (417 aa).

Zn(2+) is bound by residues Cys17, Cys20, Cys40, and His45. The segment at Cys17 to Leu59 adopts a B box-type; atypical zinc-finger fold. The tract at residues Ser63–Ser105 is disordered. A coiled-coil region spans residues Leu212–Ile239. Residues Arg361–Arg403 form the CCT domain.

This sequence belongs to the CONSTANS family.

Its subcellular location is the nucleus. The chain is Zinc finger protein CONSTANS-LIKE 16 (COL16) from Arabidopsis thaliana (Mouse-ear cress).